Consider the following 639-residue polypeptide: Chaperone protein DnaK (639 aa).

Threonine 199 carries the post-translational modification Phosphothreonine; by autocatalysis. A compositionally biased stretch (low complexity) spans 602-613; sequence AQAQQAAAGAEG. A disordered region spans residues 602–639; that stretch reads AQAQQAAAGAEGQPEDASAKQDDDVVDAEFEEVKDDKK. Positions 625-639 are enriched in acidic residues; sequence DVVDAEFEEVKDDKK.

Belongs to the heat shock protein 70 family.

Functionally, acts as a chaperone. This Pseudoalteromonas atlantica (strain T6c / ATCC BAA-1087) protein is Chaperone protein DnaK.